The following is a 179-amino-acid chain: Large ribosomal subunit protein uL5 (179 aa).

It belongs to the universal ribosomal protein uL5 family. Part of the 50S ribosomal subunit; part of the 5S rRNA/L5/L18/L25 subcomplex. Contacts the 5S rRNA and the P site tRNA. Forms a bridge to the 30S subunit in the 70S ribosome.

Functionally, this is one of the proteins that bind and probably mediate the attachment of the 5S RNA into the large ribosomal subunit, where it forms part of the central protuberance. In the 70S ribosome it contacts protein S13 of the 30S subunit (bridge B1b), connecting the 2 subunits; this bridge is implicated in subunit movement. Contacts the P site tRNA; the 5S rRNA and some of its associated proteins might help stabilize positioning of ribosome-bound tRNAs. This Deinococcus geothermalis (strain DSM 11300 / CIP 105573 / AG-3a) protein is Large ribosomal subunit protein uL5.